Consider the following 380-residue polypeptide: Ceramide synthase 2 (380 aa).

The Lumenal segment spans residues 1 to 40; the sequence is MLQTLHDYFWWERLWLPVNLTWADLEDRDGRVYAKASDLY. Residue Asn19 is glycosylated (N-linked (GlcNAc...) asparagine). The helical transmembrane segment at 41 to 61 threads the bilayer; it reads ITLPLALLFLIIRYFFELYVA. Residues 67-128 form a homeobox-like region; that stretch reads LLNVKEKTRL…RRRRNQDRPS (62 aa). One can recognise a TLC domain in the interval 131–332; sequence KKFREASWRF…ILRMAHKFIT (202 aa). A run of 4 helical transmembrane segments spans residues 140 to 160, 181 to 201, 209 to 229, and 264 to 284; these read FTFY…KPWF, WYYM…ASDV, QIIH…ANYV, and IFIV…PFWI. A Last loop motif motif is present at residues 291-300; the sequence is YPLELYPAFF. The chain crosses the membrane as a helical span at residues 304–324; the sequence is FFNFMMGVLQLLHIFWAYLIL. The Cytoplasmic portion of the chain corresponds to 325 to 380; the sequence is RMAHKFITGKVVEDERSDREETESSEGEEAAAGGGAKNRPLANGHPILNNNHRKND. Positions 338-380 are disordered; sequence DERSDREETESSEGEEAAAGGGAKNRPLANGHPILNNNHRKND. A Phosphoserine modification is found at Ser341. The span at 344 to 353 shows a compositional bias: acidic residues; it reads EETESSEGEE. Thr346 carries the phosphothreonine modification. A phosphoserine mark is found at Ser348 and Ser349.

Interacts with ATP6V0C, ASGR1, ASGR2 and SLC22A1/OCT1. Interacts with ELOV1, HSD17B12 and TECR. Interacts with NDUFS2. Acetylated. Deacetylation by SIRT3 increases enzyme activity and promotes mitochondrial ceramide accumulation. Post-translationally, phosphorylated at the C-terminus by CK2, leading to increase the ceramide synthase activity.

It localises to the endoplasmic reticulum membrane. The catalysed reaction is a very long-chain fatty acyl-CoA + a sphingoid base = an N-(very-long-chain fatty acyl)-sphingoid base + CoA + H(+). It carries out the reaction docosanoyl-CoA + sphinganine = N-docosanoylsphinganine + CoA + H(+). The enzyme catalyses tetracosanoyl-CoA + sphinganine = N-tetracosanoylsphinganine + CoA + H(+). It catalyses the reaction hexacosanoyl-CoA + sphinganine = N-hexacosanoylsphinganine + CoA + H(+). The catalysed reaction is (15Z)-tetracosenoyl-CoA + sphinganine = N-(15Z-tetracosenoyl)-sphinganine + CoA + H(+). It carries out the reaction 2-hydroxytetracosanoyl-CoA + sphinganine = N-(2-hydroxytetracosanoyl)-sphinganine + CoA + H(+). The enzyme catalyses 2-hydroxydocosanoyl-CoA + sphinganine = N-(2-hydroxydocosanoyl)-sphinganine + CoA + H(+). It catalyses the reaction 2-hydroxytetracosenoyl-CoA + sphinganine = N-(2-hydroxytetracosenoyl)-sphinganine + CoA + H(+). The catalysed reaction is tetracosenoyl-CoA + sphinganine = an N-tetracosenoylsphinganine + CoA + H(+). It carries out the reaction hexacosenoyl-CoA + sphinganine = N-hexacosenoylsphinganine + CoA + H(+). The enzyme catalyses tetracosanoyl-CoA + sphing-4-enine = N-tetracosanoyl-sphing-4-enine + CoA + H(+). It catalyses the reaction tetracosenoyl-CoA + sphing-4-enine = N-(tetracosenoyl)-sphing-4-enine + CoA + H(+). The catalysed reaction is heptadecasphing-4-enine + tetracosanoyl-CoA = N-tetracosanoyl-heptadecasphing-4-enine + CoA + H(+). It carries out the reaction a fatty acyl-CoA + sphing-4-enine = an N-acylsphing-4-enine + CoA + H(+). The enzyme catalyses sphing-4-enine + hexadecanoyl-CoA = N-hexadecanoylsphing-4-enine + CoA + H(+). It catalyses the reaction sphing-4-enine + octadecanoyl-CoA = N-octadecanoylsphing-4-enine + CoA + H(+). The catalysed reaction is eicosanoyl-CoA + sphing-4-enine = N-eicosanoyl-sphing-4-enine + CoA + H(+). It carries out the reaction sphinganine + hexadecanoyl-CoA = N-hexadecanoylsphinganine + CoA + H(+). The enzyme catalyses sphinganine + octadecanoyl-CoA = N-(octadecanoyl)-sphinganine + CoA + H(+). It catalyses the reaction sphinganine + (9Z)-octadecenoyl-CoA = N-(9Z-octadecenoyl)-sphinganine + CoA + H(+). The catalysed reaction is eicosanoyl-CoA + sphinganine = N-eicosanoylsphinganine + CoA + H(+). It participates in lipid metabolism; sphingolipid metabolism. Ceramide synthase activity is inhibited by sphingosine-1-phosphate. Functionally, ceramide synthase that catalyzes the transfer of the acyl chain from acyl-CoA to a sphingoid base, with high selectivity toward very-long-chain fatty acyl-CoA (chain length C22-C27). N-acylates sphinganine and sphingosine bases to form dihydroceramides and ceramides in de novo synthesis and salvage pathways, respectively. Plays a non-redundant role in the synthesis of ceramides with very-long-chain fatty acids in kidney, liver and brain. Regulates the abundance of myelin-specific sphingolipids galactosylceramide and sulfatide that affects myelin sheath architecture and motor neuron functions. This chain is Ceramide synthase 2, found in Bos taurus (Bovine).